The primary structure comprises 910 residues: Importin subunit beta-2 (910 aa).

HEAT repeat units lie at residues 12-39 (VLVELSEVIKNSLSENSQTRNAALNLLE), 44-82 (IPDLNNYLTCILINATELSVSIRSAAGLLLKNNVRVSSL), 93-126 (YTKSTVIRGLCDPEQLIRGISGNVITTIISRWGI), 132-169 (VLPQLMEMLSSPASTTQEGAFSALTKICEDSAQELDRD), 177-207 (DFMIPRFIELARHENPKIRTDALFCLNQFVL), 220-247 (FLETCYALATDVSPNVRKNVCQALVYLL), 259-286 (GSIVEYMLYSTQDSDQNVALEACEFWLA), 302-406 (DKIV…LSSF), 414-442 (IILPHLKQSLTSEDWKVQEAGVLAVGAIA), 454-481 (PELYPYFLSLLDSKKPLVRTITCWTLGR), 499-532 (FVPLLQGLLRMVVDNNKKVQEAGCSAFAILEEQA), 540-573 (LEPILTNLAFAFQKYQRKNVLILYDAVQTLADYV), 581-619 (RYIELLITPLLQKWSMIPDDDPNLFPLFECLSSVAVALR), 627-677 (AETY…ALGS), 690-721 (LGQIIGICAKDEVPEVRQSAYALLGDMCMYCF), 729-764 (DALLVDMLPQMQLPLLHVSASNNAIWSAGEMALQLG), 772-807 (KPLLERLICILKSKKSNTTVLENVAITIGRLGVYNP), 815-848 (ELFYQPWFEIIKTVGENEEKDSAFRGFCNILACN), and 857-888 (PMFVLCVAEYENPSAELRDMFQKILQGSVELF). The 89-residue stretch at 34–122 (ALNLLEKAKD…SGNVITTIIS (89 aa)) folds into the Importin N-terminal domain. A disordered region spans residues 333–381 (DREEDIRPQHAKGKSRITLNTQGPITQQGSSNADADELEDEDEDDDEFD). Over residues 349–364 (ITLNTQGPITQQGSSN) the composition is skewed to polar residues. Acidic residues predominate over residues 366-381 (DADELEDEDEDDDEFD).

Belongs to the importin beta family. Importin beta-2 subfamily. Interacts with Ran; interacts specifically with the GTP-bound form of Ran (GTP-Ran), protecting it from GTP hydrolysis and nucleotide exchange. Interacts with nucleoporins.

The protein localises to the cytoplasm. It localises to the nucleus envelope. Functions in nuclear protein import as nuclear transport receptor. Serves as receptor for arginine/glycine-rich nuclear localization signals (rg-NLS) and PY-NLS in cargo substrates. Its predominant cargo substrate seems to be mRNA-binding proteins. Mediates docking of the importin/substrate complex to the nuclear pore complex (NPC) through binding to repeat-containing nucleoporins. The complex is subsequently translocated through the pore by an energy requiring, Ran-dependent mechanism. At the nucleoplasmic side of the NPC, GTP-Ran binding leads to release of the cargo. The importin is re-exported from the nucleus to the cytoplasm where GTP hydrolysis releases Ran from importin. The directionality of nuclear import is thought to be conferred by an asymmetric distribution of the GTP- and GDP-bound forms of Ran between the cytoplasm and nucleus. The polypeptide is Importin subunit beta-2 (Schizosaccharomyces pombe (strain 972 / ATCC 24843) (Fission yeast)).